The primary structure comprises 316 residues: 2,3-dihydroxyphenylpropionate/2,3-dihydroxicinnamic acid 1,2-dioxygenase (316 aa).

The active-site Proton donor is His-115. Catalysis depends on His-180, which acts as the Proton acceptor.

The protein belongs to the LigB/MhpB extradiol dioxygenase family. As to quaternary structure, homotetramer. Requires Fe(2+) as cofactor.

It carries out the reaction 3-(2,3-dihydroxyphenyl)propanoate + O2 = (2Z,4E)-2-hydroxy-6-oxonona-2,4-dienedioate + H(+). The enzyme catalyses (2E)-3-(2,3-dihydroxyphenyl)prop-2-enoate + O2 = (2Z,4E,7E)-2-hydroxy-6-oxonona-2,4,7-trienedioate + H(+). It participates in aromatic compound metabolism; 3-phenylpropanoate degradation. In terms of biological role, catalyzes the non-heme iron(II)-dependent oxidative cleavage of 2,3-dihydroxyphenylpropionic acid and 2,3-dihydroxicinnamic acid into 2-hydroxy-6-ketononadienedioate and 2-hydroxy-6-ketononatrienedioate, respectively. The chain is 2,3-dihydroxyphenylpropionate/2,3-dihydroxicinnamic acid 1,2-dioxygenase from Rhodococcus rhodochrous.